The following is a 609-amino-acid chain: DNA-directed RNA polymerase subunit beta' (609 aa).

The Zn(2+) site is built by Cys67, Cys69, Cys82, and Cys85. 3 residues coordinate Mg(2+): Asp460, Asp462, and Asp464.

It belongs to the RNA polymerase beta' chain family. RpoC1 subfamily. In plastids the minimal PEP RNA polymerase catalytic core is composed of four subunits: alpha, beta, beta', and beta''. When a (nuclear-encoded) sigma factor is associated with the core the holoenzyme is formed, which can initiate transcription. The cofactor is Mg(2+). Requires Zn(2+) as cofactor.

Its subcellular location is the plastid. It is found in the chloroplast. The catalysed reaction is RNA(n) + a ribonucleoside 5'-triphosphate = RNA(n+1) + diphosphate. In terms of biological role, DNA-dependent RNA polymerase catalyzes the transcription of DNA into RNA using the four ribonucleoside triphosphates as substrates. This is DNA-directed RNA polymerase subunit beta' from Emiliania huxleyi (Coccolithophore).